The sequence spans 98 residues: Small ribosomal subunit protein bS6 (98 aa).

It belongs to the bacterial ribosomal protein bS6 family.

Binds together with bS18 to 16S ribosomal RNA. This chain is Small ribosomal subunit protein bS6, found in Lactobacillus acidophilus (strain ATCC 700396 / NCK56 / N2 / NCFM).